A 688-amino-acid polypeptide reads, in one-letter code: DNA ligase (688 aa).

Residues 38-42 (DEEYD), 87-88 (SL), and Glu-118 each bind NAD(+). Lys-120 acts as the N6-AMP-lysine intermediate in catalysis. Residues Arg-141, Glu-175, Lys-291, and Lys-315 each coordinate NAD(+). Residues Cys-409, Cys-412, Cys-428, and Cys-433 each coordinate Zn(2+). The 90-residue stretch at 590–679 (VKLDILRGLT…AELKGYNFDE (90 aa)) folds into the BRCT domain.

Belongs to the NAD-dependent DNA ligase family. LigA subfamily. Requires Mg(2+) as cofactor. Mn(2+) serves as cofactor.

It carries out the reaction NAD(+) + (deoxyribonucleotide)n-3'-hydroxyl + 5'-phospho-(deoxyribonucleotide)m = (deoxyribonucleotide)n+m + AMP + beta-nicotinamide D-nucleotide.. DNA ligase that catalyzes the formation of phosphodiester linkages between 5'-phosphoryl and 3'-hydroxyl groups in double-stranded DNA using NAD as a coenzyme and as the energy source for the reaction. It is essential for DNA replication and repair of damaged DNA. In Thermotoga maritima (strain ATCC 43589 / DSM 3109 / JCM 10099 / NBRC 100826 / MSB8), this protein is DNA ligase.